The chain runs to 71 residues: Dermonecrotic toxin LgSicTox-alphaI-Loxn-A (71 aa).

The active site involves His-12. Glu-32, Asp-34, and Asp-48 together coordinate Mg(2+).

Mg(2+) is required as a cofactor. In terms of processing, contains 2 disulfide bonds. In terms of tissue distribution, expressed by the venom gland.

It is found in the secreted. The catalysed reaction is an N-(acyl)-sphingosylphosphocholine = an N-(acyl)-sphingosyl-1,3-cyclic phosphate + choline. It catalyses the reaction an N-(acyl)-sphingosylphosphoethanolamine = an N-(acyl)-sphingosyl-1,3-cyclic phosphate + ethanolamine. It carries out the reaction a 1-acyl-sn-glycero-3-phosphocholine = a 1-acyl-sn-glycero-2,3-cyclic phosphate + choline. The enzyme catalyses a 1-acyl-sn-glycero-3-phosphoethanolamine = a 1-acyl-sn-glycero-2,3-cyclic phosphate + ethanolamine. Catalyzes the hydrolysis of sphingomyelin. May also act on other phosphatidyl esters. In terms of biological role, dermonecrotic toxins cleave the phosphodiester linkage between the phosphate and headgroup of certain phospholipids (sphingolipid and lysolipid substrates), forming an alcohol (often choline) and a cyclic phosphate. This toxin acts on sphingomyelin (SM). It may also act on ceramide phosphoethanolamine (CPE), lysophosphatidylcholine (LPC) and lysophosphatidylethanolamine (LPE), but not on lysophosphatidylserine (LPS), and lysophosphatidylglycerol (LPG). It acts by transphosphatidylation, releasing exclusively cyclic phosphate products as second products. In vivo, induces dermonecrosis, but is not lethal. Induces hemolysis, vascular permeability, edema, inflammatory response, and platelet aggregation. This is Dermonecrotic toxin LgSicTox-alphaI-Loxn-A from Loxosceles gaucho (Spider).